A 238-amino-acid chain; its full sequence is Aspartate/glutamate leucyltransferase (238 aa).

It belongs to the R-transferase family. Bpt subfamily.

The protein resides in the cytoplasm. It carries out the reaction N-terminal L-glutamyl-[protein] + L-leucyl-tRNA(Leu) = N-terminal L-leucyl-L-glutamyl-[protein] + tRNA(Leu) + H(+). The catalysed reaction is N-terminal L-aspartyl-[protein] + L-leucyl-tRNA(Leu) = N-terminal L-leucyl-L-aspartyl-[protein] + tRNA(Leu) + H(+). In terms of biological role, functions in the N-end rule pathway of protein degradation where it conjugates Leu from its aminoacyl-tRNA to the N-termini of proteins containing an N-terminal aspartate or glutamate. This chain is Aspartate/glutamate leucyltransferase, found in Shewanella oneidensis (strain ATCC 700550 / JCM 31522 / CIP 106686 / LMG 19005 / NCIMB 14063 / MR-1).